A 549-amino-acid polypeptide reads, in one-letter code: MTRRWALPLLLIAFGLFYLLPLATHGLWIPDETRYAQISQEMLLTGKWASPHFMGIRYFEKPVAGYWMIAIGQALFGDNLFGVRVASALSTGLSVVLAYLLARRLWNDPRKSLASALLYMSFTVVALQAGYANLDPQFTFWVNLSLVALWFTFDCRTTRGQVLAWVALGLACGMGFMTKGFLAWLLPVLVALPYAIWQKRLRSLLIYGGIGVLVAILISLPWALAVHSQEPDYWRFFFWHEHIRRFAGDDAQHASPWWYYLPLLVGFSVPWVLLLPAGLKQAWQQRRQNSSGFLLLWLVLPLAFFSLSKGKLPAYILPCLLPLALLMGNTLVDRLAAGKTRLLAFNGVLNLVAGLLGLLALVYFQMKKPVYVDEPQHLVLVYVLLLGWILSNLLQAMRPLTLWAAPALGSFLLVALAPAALPNSVVYNKIPDQFIIDHVAELGQAKALLSNDLGAASALAWRLRRPDVTLYNTEGEVKYGLGYEDTAARKVDLNQVQPWIAEARKQGSIGVVMRVKSSDEEHEVELLPKDAKRYEQGNIVIFIIPQSQP.

The next 12 membrane-spanning stretches (helical) occupy residues leucine 9–isoleucine 29, leucine 80–alanine 102, serine 112–alanine 132, asparagine 133–phenylalanine 153, phenylalanine 176–isoleucine 196, leucine 204–leucine 224, tryptophan 257–alanine 277, serine 290–glycine 310, leucine 312–valine 332, leucine 342–valine 362, histidine 377–methionine 397, and leucine 402–proline 422.

This sequence belongs to the glycosyltransferase 83 family.

The protein localises to the cell inner membrane. The catalysed reaction is 4-amino-4-deoxy-alpha-L-arabinopyranosyl di-trans,octa-cis-undecaprenyl phosphate + lipid IVA = lipid IIA + di-trans,octa-cis-undecaprenyl phosphate.. It participates in lipopolysaccharide metabolism; 4-amino-4-deoxy-beta-L-arabinose-lipid A biosynthesis. Its function is as follows. Catalyzes the transfer of the L-Ara4N moiety of the glycolipid undecaprenyl phosphate-alpha-L-Ara4N to lipid A. The modified arabinose is attached to lipid A and is required for resistance to polymyxin and cationic antimicrobial peptides. The polypeptide is Undecaprenyl phosphate-alpha-4-amino-4-deoxy-L-arabinose arabinosyl transferase 1 (Pseudomonas fluorescens (strain ATCC BAA-477 / NRRL B-23932 / Pf-5)).